Reading from the N-terminus, the 511-residue chain is Chromosomal replication initiator protein DnaA (511 aa).

Residues 1–90 are domain I, interacts with DnaA modulators; that stretch reads MSVELWQQCV…RRSSAPRAAP (90 aa). The domain II stretch occupies residues 91–174; the sequence is NAPVSAAMAA…QVEGALKHTS (84 aa). Positions 125–161 are disordered; it reads TAEPAQASDMAEASSRDSYDSMADSAPAPVAPGRTEQ. A domain III, AAA+ region region spans residues 175-391; that stretch reads YLNRTFTFET…GALKRVIAHS (217 aa). ATP contacts are provided by glycine 219, glycine 221, lysine 222, and threonine 223. Residues 392 to 511 form a domain IV, binds dsDNA region; it reads HFMGRDITIE…YKNLLRTLTT (120 aa).

The protein belongs to the DnaA family. Oligomerizes as a right-handed, spiral filament on DNA at oriC.

Its subcellular location is the cytoplasm. Functionally, plays an essential role in the initiation and regulation of chromosomal replication. ATP-DnaA binds to the origin of replication (oriC) to initiate formation of the DNA replication initiation complex once per cell cycle. Binds the DnaA box (a 9 base pair repeat at the origin) and separates the double-stranded (ds)DNA. Forms a right-handed helical filament on oriC DNA; dsDNA binds to the exterior of the filament while single-stranded (ss)DNA is stabiized in the filament's interior. The ATP-DnaA-oriC complex binds and stabilizes one strand of the AT-rich DNA unwinding element (DUE), permitting loading of DNA polymerase. After initiation quickly degrades to an ADP-DnaA complex that is not apt for DNA replication. Binds acidic phospholipids. This Pseudomonas putida (strain W619) protein is Chromosomal replication initiator protein DnaA.